The primary structure comprises 204 residues: Probable molybdenum cofactor guanylyltransferase (204 aa).

Residues 10 to 12 (LSG), K22, D75, and D104 each bind GTP. D104 is a binding site for Mg(2+).

Belongs to the MobA family. It depends on Mg(2+) as a cofactor.

The protein localises to the cytoplasm. The enzyme catalyses Mo-molybdopterin + GTP + H(+) = Mo-molybdopterin guanine dinucleotide + diphosphate. Transfers a GMP moiety from GTP to Mo-molybdopterin (Mo-MPT) cofactor (Moco or molybdenum cofactor) to form Mo-molybdopterin guanine dinucleotide (Mo-MGD) cofactor. In Methanocaldococcus jannaschii (strain ATCC 43067 / DSM 2661 / JAL-1 / JCM 10045 / NBRC 100440) (Methanococcus jannaschii), this protein is Probable molybdenum cofactor guanylyltransferase.